The chain runs to 395 residues: F-box/kelch-repeat protein At4g39570 (395 aa).

Residues 1-25 (MSSPERKRKRVTSTKNPSVKKKKKI) show a composition bias toward basic residues. Residues 1 to 29 (MSSPERKRKRVTSTKNPSVKKKKKISPVP) form a disordered region. The F-box domain occupies 29–75 (PTPIPSLPDDLLVSIFARVSRLYYPILSLVSKSFRSLLRSPELYETR). Kelch repeat units follow at residues 150–197 (DIYF…VIDG) and 198–246 (KIYV…RSAY).

This is F-box/kelch-repeat protein At4g39570 from Arabidopsis thaliana (Mouse-ear cress).